We begin with the raw amino-acid sequence, 172 residues long: Putative metal-dependent hydrolase OB0782 (172 aa).

Residues histidine 64, histidine 155, and histidine 159 each contribute to the Zn(2+) site.

The protein belongs to the metal hydrolase YfiT family. In terms of assembly, homodimer. Requires Zn(2+) as cofactor.

The protein resides in the cytoplasm. In terms of biological role, possible metal-dependent hydrolase. This is Putative metal-dependent hydrolase OB0782 from Oceanobacillus iheyensis (strain DSM 14371 / CIP 107618 / JCM 11309 / KCTC 3954 / HTE831).